The chain runs to 187 residues: Probable chemoreceptor glutamine deamidase CheD 1 (187 aa).

It belongs to the CheD family.

It carries out the reaction L-glutaminyl-[protein] + H2O = L-glutamyl-[protein] + NH4(+). Probably deamidates glutamine residues to glutamate on methyl-accepting chemotaxis receptors (MCPs), playing an important role in chemotaxis. The polypeptide is Probable chemoreceptor glutamine deamidase CheD 1 (Ruegeria sp. (strain TM1040) (Silicibacter sp.)).